Reading from the N-terminus, the 412-residue chain is Arginine biosynthesis bifunctional protein ArgJ (412 aa).

Substrate-binding residues include Thr162, Lys188, Thr199, Glu285, Asn407, and Thr412. Residue Thr199 is the Nucleophile of the active site.

This sequence belongs to the ArgJ family. Heterotetramer of two alpha and two beta chains.

It is found in the cytoplasm. The catalysed reaction is N(2)-acetyl-L-ornithine + L-glutamate = N-acetyl-L-glutamate + L-ornithine. It catalyses the reaction L-glutamate + acetyl-CoA = N-acetyl-L-glutamate + CoA + H(+). The protein operates within amino-acid biosynthesis; L-arginine biosynthesis; L-ornithine and N-acetyl-L-glutamate from L-glutamate and N(2)-acetyl-L-ornithine (cyclic): step 1/1. It functions in the pathway amino-acid biosynthesis; L-arginine biosynthesis; N(2)-acetyl-L-ornithine from L-glutamate: step 1/4. Functionally, catalyzes two activities which are involved in the cyclic version of arginine biosynthesis: the synthesis of N-acetylglutamate from glutamate and acetyl-CoA as the acetyl donor, and of ornithine by transacetylation between N(2)-acetylornithine and glutamate. This Staphylococcus saprophyticus subsp. saprophyticus (strain ATCC 15305 / DSM 20229 / NCIMB 8711 / NCTC 7292 / S-41) protein is Arginine biosynthesis bifunctional protein ArgJ.